The following is a 305-amino-acid chain: Undecaprenyl-diphosphatase (305 aa).

A run of 8 helical transmembrane segments spans residues Gly18 to Val38, Tyr55 to Trp75, Trp103 to Phe123, Pro130 to Leu150, Gly187 to Ile207, Phe225 to Leu245, Phe246 to Val266, and Leu284 to Leu304.

It belongs to the UppP family.

The protein resides in the cell membrane. It carries out the reaction di-trans,octa-cis-undecaprenyl diphosphate + H2O = di-trans,octa-cis-undecaprenyl phosphate + phosphate + H(+). Its function is as follows. Catalyzes the dephosphorylation of undecaprenyl diphosphate (UPP). Confers resistance to bacitracin. This chain is Undecaprenyl-diphosphatase, found in Mycobacterium avium (strain 104).